A 135-amino-acid polypeptide reads, in one-letter code: Biglycan (135 aa).

LRR repeat units follow at residues 4–24, 25–46, 49–72, 73–95, and 96–117; these read KLNY…DLPE, TLNE…DLLR, KLYR…SFLP, TLRE…PDLK, and LLQV…DFCP. N-linked (GlcNAc...) asparagine glycosylation is present at Asn-65. Asn-106 carries N-linked (GlcNAc...) asparagine glycosylation.

This sequence belongs to the small leucine-rich proteoglycan (SLRP) family. SLRP class I subfamily. Homodimer. Forms a ternary complex with MFAP2 and ELN. In terms of processing, the two attached glycosaminoglycan chains can be either chondroitin sulfate or dermatan sulfate. As to expression, found in several connective tissues, especially in articular cartilages.

It localises to the secreted. The protein resides in the extracellular space. The protein localises to the extracellular matrix. In terms of biological role, may be involved in collagen fiber assembly. The polypeptide is Biglycan (BGN) (Oryctolagus cuniculus (Rabbit)).